The primary structure comprises 402 residues: Elongation factor Tu (402 aa).

A tr-type G domain is found at 10–212; the sequence is KPHVNIGTIG…AVDEYIPTPE (203 aa). Residues 19–26 form a G1 region; it reads GHVDHGKT. Position 19-26 (19-26) interacts with GTP; the sequence is GHVDHGKT. Position 26 (T26) interacts with Mg(2+). Residues 60-64 are G2; that stretch reads GITIA. Residues 81–84 are G3; that stretch reads DCPG. GTP contacts are provided by residues 81–85 and 136–139; these read DCPGH and NKED. Residues 136-139 form a G4 region; it reads NKED. The interval 177-179 is G5; the sequence is SAF.

Belongs to the TRAFAC class translation factor GTPase superfamily. Classic translation factor GTPase family. EF-Tu/EF-1A subfamily. Monomer.

Its subcellular location is the cytoplasm. It carries out the reaction GTP + H2O = GDP + phosphate + H(+). Its function is as follows. GTP hydrolase that promotes the GTP-dependent binding of aminoacyl-tRNA to the A-site of ribosomes during protein biosynthesis. The polypeptide is Elongation factor Tu (Aliarcobacter butzleri (strain RM4018) (Arcobacter butzleri)).